We begin with the raw amino-acid sequence, 392 residues long: Probable tRNA sulfurtransferase (392 aa).

The THUMP domain occupies 61–168; that stretch reads DEALKLLSKV…EFTYIYSEII (108 aa). ATP-binding positions include 185–186, 210–211, Arg-267, Gly-289, and Gln-298; these read LL and HF.

This sequence belongs to the ThiI family.

The protein localises to the cytoplasm. The enzyme catalyses [ThiI sulfur-carrier protein]-S-sulfanyl-L-cysteine + a uridine in tRNA + 2 reduced [2Fe-2S]-[ferredoxin] + ATP + H(+) = [ThiI sulfur-carrier protein]-L-cysteine + a 4-thiouridine in tRNA + 2 oxidized [2Fe-2S]-[ferredoxin] + AMP + diphosphate. It carries out the reaction [ThiS sulfur-carrier protein]-C-terminal Gly-Gly-AMP + S-sulfanyl-L-cysteinyl-[cysteine desulfurase] + AH2 = [ThiS sulfur-carrier protein]-C-terminal-Gly-aminoethanethioate + L-cysteinyl-[cysteine desulfurase] + A + AMP + 2 H(+). The protein operates within cofactor biosynthesis; thiamine diphosphate biosynthesis. In terms of biological role, catalyzes the ATP-dependent transfer of a sulfur to tRNA to produce 4-thiouridine in position 8 of tRNAs, which functions as a near-UV photosensor. Also catalyzes the transfer of sulfur to the sulfur carrier protein ThiS, forming ThiS-thiocarboxylate. This is a step in the synthesis of thiazole, in the thiamine biosynthesis pathway. The sulfur is donated as persulfide by IscS. The protein is Probable tRNA sulfurtransferase of Acetivibrio thermocellus (strain ATCC 27405 / DSM 1237 / JCM 9322 / NBRC 103400 / NCIMB 10682 / NRRL B-4536 / VPI 7372) (Clostridium thermocellum).